The following is a 499-amino-acid chain: Beta-amylase (499 aa).

Substrate-binding residues include aspartate 55, histidine 95, and aspartate 103. The Proton donor role is filled by glutamate 188. 3 residues coordinate substrate: lysine 298, histidine 303, and threonine 345. The active-site Proton acceptor is the glutamate 383. Residues 384-385 (NA) and arginine 423 each bind substrate.

Belongs to the glycosyl hydrolase 14 family. As to quaternary structure, homotetramer.

The catalysed reaction is Hydrolysis of (1-&gt;4)-alpha-D-glucosidic linkages in polysaccharides so as to remove successive maltose units from the non-reducing ends of the chains.. The chain is Beta-amylase (BMY1) from Ipomoea batatas (Sweet potato).